The sequence spans 111 residues: uncharacterized protein (111 aa).

It is found in the cytoplasm. The protein resides in the nucleus. This is an uncharacterized protein from Schizosaccharomyces pombe (strain 972 / ATCC 24843) (Fission yeast).